The primary structure comprises 536 residues: MTEKDTDGADGLTKAKSNAVSEDYETVNHVTGLKLAVIVTGLCLSVLLVALDNTIIATAIPKITDQFHALEDIGWYGSSYLLTICAFQLIFGKIYTFFPVKWVFLIAITIFEIGSAICGAAPNSTALIIGRAVAGIGSAGIFSGALIIIAYSIPLEKRPAYTGAIGGMYGIASVAGPLMGGAFTDHISWRWCFYINLPIGAVTILSILIFLKHPKQKLDNNQTWKARLLKLDPIGTAFFMPSIICLLLALQWGGTKYPWNNGRIIALFVVFAVLISGFIYFQIRGGDSATVPPRILKKRSIASGAFFLFTIGSAFFIMVYYLPIWFQAIKGASATSSGIMNIPMVLSLVVLSIASGITVTAIGYYAPLYYVSTVLTSIGAGLLTTFTTETSKGKWIGYQIIFGAGVGTGLQLSIIAAQAVLPLEDVAVGTVIMMFCQTLGGALFVSVGQNVFTNLLVKGVVNAAPGLDPQVVLRVGATQLKNMIPPQFLDGVQVAYNDALTKTWYVATALAALSVIGSVGMEWKSVKGKKIEPAAA.

A run of 3 helical transmembrane segments spans residues 30 to 50 (VTGL…LLVA), 80 to 100 (YLLT…FFPV), and 102 to 122 (WVFL…GAAP). The N-linked (GlcNAc...) asparagine glycan is linked to N123. 3 helical membrane-spanning segments follow: residues 133–153 (VAGI…AYSI), 163–183 (GAIG…GGAF), and 191–211 (WCFY…LIFL). N-linked (GlcNAc...) asparagine glycosylation is present at N221. Helical transmembrane passes span 234–254 (IGTA…QWGG), 264–284 (IIAL…FQIR), 306–326 (FFLF…PIWF), 342–362 (IPMV…VTAI), 366–386 (APLY…LTTF), 400–420 (IIFG…AQAV), 426–446 (VAVG…LFVS), and 503–523 (TWYV…GMEW).

This sequence belongs to the major facilitator superfamily. TCR/Tet family.

The protein resides in the cell membrane. Functionally, MFS-type efflux pump involved in the modulation susceptibility to azoles, including fluconazole, itraconazole, miconazole and voriconazole. Also confers increased resistance chloramphenicol and thiamphenicol, suggesting that it acts as a pleiotropic drug transporter with a broad substrate spectrum. Finally, increases the tolerance to cycloheximide when expressed in S.cerevisiae, but not in dermatophyte species. This Arthroderma benhamiae (strain ATCC MYA-4681 / CBS 112371) (Trichophyton mentagrophytes) protein is MFS-type efflux pump MFS1.